Reading from the N-terminus, the 434-residue chain is UPF0053 protein YrkA (434 aa).

The 201-residue stretch at 1–201 (MTTINLIIFT…YKSGEINQNE (201 aa)) folds into the CNNM transmembrane domain. 3 helical membrane-spanning segments follow: residues 7 to 27 (IIFTLLIVLTAFFVATEFAIV), 64 to 84 (LGITVTALGIGWVGESTFEVI), and 101 to 121 (VLILVIAFVMATFLHVVVGEL). CBS domains follow at residues 220 to 282 (MIPR…KIKE) and 289 to 346 (HINP…IRDE).

It belongs to the UPF0053 family.

It is found in the cell membrane. This Bacillus subtilis (strain 168) protein is UPF0053 protein YrkA (yrkA).